Here is a 514-residue protein sequence, read N- to C-terminus: Pentatricopeptide repeat-containing protein At4g26800 (514 aa).

11 PPR repeats span residues 122–156 (DLYT…GIEP), 157–191 (DIVT…GIKR), 192–226 (DVVV…GISP), 227–261 (NVVT…KINP), 262–296 (NVIT…SIDP), 297–331 (NVFT…GCTP), 332–366 (NVVT…GVAA), 367–401 (NTVS…GLIP), 402–436 (NIRS…RNDL), 437–471 (DIIT…RVEP), and 472–510 (DFKA…ESAP).

This sequence belongs to the PPR family. P subfamily.

This Arabidopsis thaliana (Mouse-ear cress) protein is Pentatricopeptide repeat-containing protein At4g26800.